Consider the following 928-residue polypeptide: Isoleucine--tRNA ligase (928 aa).

Residues 57–67 (PFANGNIHMGH) carry the 'HIGH' region motif. Glutamate 552 serves as a coordination point for L-isoleucyl-5'-AMP. A 'KMSKS' region motif is present at residues 593-597 (KMSKS). An ATP-binding site is contributed by lysine 596. Zn(2+)-binding residues include cysteine 887, cysteine 890, cysteine 907, and cysteine 910.

The protein belongs to the class-I aminoacyl-tRNA synthetase family. IleS type 1 subfamily. As to quaternary structure, monomer. Zn(2+) is required as a cofactor.

The protein localises to the cytoplasm. It carries out the reaction tRNA(Ile) + L-isoleucine + ATP = L-isoleucyl-tRNA(Ile) + AMP + diphosphate. Catalyzes the attachment of isoleucine to tRNA(Ile). As IleRS can inadvertently accommodate and process structurally similar amino acids such as valine, to avoid such errors it has two additional distinct tRNA(Ile)-dependent editing activities. One activity is designated as 'pretransfer' editing and involves the hydrolysis of activated Val-AMP. The other activity is designated 'posttransfer' editing and involves deacylation of mischarged Val-tRNA(Ile). This is Isoleucine--tRNA ligase from Lacticaseibacillus casei (strain BL23) (Lactobacillus casei).